A 535-amino-acid polypeptide reads, in one-letter code: Heparanase (535 aa).

The N-terminal stretch at 1–27 (MLRLLLLWLWGPLGALAQGAPAGTAPT) is a signal peptide. Residues 54–56 (DAS) and T89 contribute to the heparan sulfate group site. The propeptide at 102 to 149 (PTSEERSYWKSQVNHDICRSEPVSAAVLRKLQVEWPFQELLLLREQYQ) is linker peptide. C119 and C171 are joined by a disulfide. 150 to 154 (KEFKN) is a heparan sulfate group binding site. N192 and N209 each carry an N-linked (GlcNAc...) asparagine glycan. The active-site Proton donor is the E217. Residues 262 to 272 (QPRGKTVKLLR), H288, and R295 contribute to the heparan sulfate group site. The required for heterodimerization with the heparanase 8 kDa subunit stretch occupies residues 280–409 (EVIDSLTWHH…LLFKKLVGPR (130 aa)). E335 (nucleophile) is an active-site residue. Residues 340 to 342 (YGG) and 381 to 383 (GNY) each bind heparan sulfate group. The cysteines at positions 429 and 534 are disulfide-linked. N-linked (GlcNAc...) asparagine glycosylation occurs at N451. Residues 519 to 535 (FSYGFFVIRNAKIAACI) are required for transferring proheparanase to the Golgi apparatus, secretion and subsequent enzyme activity and for enhancement of PKB/AKT1 phosphorylation.

It belongs to the glycosyl hydrolase 79 family. In terms of assembly, heterodimer; heterodimer formation between the 8 kDa and the 50 kDa subunits is required for enzyme activity. Interacts with TF; the interaction, inhibited by heparin, enhances the generation of activated factor X and activates coagulation. Interacts with HRG; the interaction is enhanced at acidic pH, partially inhibits binding of HPSE to cell surface receptors and modulates its enzymatic activity. Interacts with SDC1; the interaction enhances the shedding of SDC1. Interacts with HPSE2. Proteolytically processed. The cleavage of the 65 kDa form leads to the generation of a linker peptide, and the 8 kDa and 50 kDa products. The active form, the 8/50 kDa heterodimer, is resistant to degradation. Complete removal of the linker peptide appears to be a prerequisite to the complete activation of the enzyme. Post-translationally, N-glycosylated. Glycosylation of the 50 kDa subunit appears to be essential for its solubility. In terms of tissue distribution, expressed in skin, mainly in the stratum granulosum and the first layer of the stratum corneum in the upper part of the epidermis. Also detected in hair follicles and in sebaceous glands.

Its subcellular location is the lysosome membrane. It is found in the secreted. The protein resides in the nucleus. It carries out the reaction endohydrolysis of (1-&gt;4)-beta-D-glycosidic bonds of heparan sulfate chains in heparan sulfate proteoglycan.. Its activity is regulated as follows. Inhibited by EDTA and activated by calcium and magnesium. Inhibited by laminarin sulfate and, to a lower extent, by heparin and sulfamin. Endoglycosidase that cleaves heparan sulfate proteoglycans (HSPGs) into heparan sulfate side chains and core proteoglycans. Participates in extracellular matrix (ECM) degradation and remodeling. Selectively cleaves the linkage between a glucuronic acid unit and an N-sulfo glucosamine unit carrying either a 3-O-sulfo or a 6-O-sulfo group. Can also cleave the linkage between a glucuronic acid unit and an N-sulfo glucosamine unit carrying a 2-O-sulfo group, but not linkages between a glucuronic acid unit and a 2-O-sulfated iduronic acid moiety. It is essentially inactive at neutral pH but becomes active under acidic conditions such as during tumor invasion and in inflammatory processes. Facilitates cell migration associated with metastasis, wound healing and inflammation. Enhances shedding of syndecans, and increases endothelial invasion and angiogenesis in myelomas. Acts as a procoagulant by increasing the generation of activation factor X in the presence of tissue factor and activation factor VII. Increases cell adhesion to the extracellular matrix (ECM), independent of its enzymatic activity. Induces AKT1/PKB phosphorylation via lipid rafts increasing cell mobility and invasion. Heparin increases this AKT1/PKB activation. Regulates osteogenesis. Enhances angiogenesis through up-regulation of SRC-mediated activation of VEGF. Implicated in hair follicle inner root sheath differentiation and hair homeostasis. The protein is Heparanase (Hpse) of Mus musculus (Mouse).